Reading from the N-terminus, the 1415-residue chain is DNA-directed RNA polymerase subunit beta' (1415 aa).

The Zn(2+) site is built by C70, C72, C85, and C88. D461, D463, and D465 together coordinate Mg(2+). Residues C820, C894, C901, and C904 each coordinate Zn(2+).

Belongs to the RNA polymerase beta' chain family. The RNAP catalytic core consists of 2 alpha, 1 beta, 1 beta' and 1 omega subunit. When a sigma factor is associated with the core the holoenzyme is formed, which can initiate transcription. It depends on Mg(2+) as a cofactor. Requires Zn(2+) as cofactor.

It catalyses the reaction RNA(n) + a ribonucleoside 5'-triphosphate = RNA(n+1) + diphosphate. In terms of biological role, DNA-dependent RNA polymerase catalyzes the transcription of DNA into RNA using the four ribonucleoside triphosphates as substrates. In Cupriavidus necator (strain ATCC 17699 / DSM 428 / KCTC 22496 / NCIMB 10442 / H16 / Stanier 337) (Ralstonia eutropha), this protein is DNA-directed RNA polymerase subunit beta'.